The primary structure comprises 110 residues: Prothymosin alpha (110 aa).

Methionine 1 is subject to N-acetylmethionine. Positions 1–110 (MSDAAVDTSS…TKKQKTDEDD (110 aa)) are disordered. The residue at position 2 (serine 2) is an N-acetylserine; in Prothymosin alpha, N-terminally processed. Serine 2 carries the phosphoserine modification. Phosphothreonine; by CK2 is present on threonine 8. Phosphoserine occurs at positions 9 and 10. Phosphothreonine; by CK2 occurs at positions 13 and 14. A compositionally biased stretch (basic and acidic residues) spans 13-31 (TTKDLKEKKEVVEEAENGR). Lysine 15 is subject to N6-acetyllysine; alternate. The residue at position 15 (lysine 15) is an N6-succinyllysine; alternate. Residues 32–41 (EAPANGNANE) show a composition bias toward low complexity. A compositionally biased stretch (acidic residues) spans 42-83 (ENGEQEADNEVDEEEEEGGEEEEEEEEGDGEEEDGDEDEEAE). The span at 100–110 (DTKKQKTDEDD) shows a compositional bias: basic and acidic residues. Threonine 101 is subject to Phosphothreonine. Lysine 102 carries the post-translational modification N6-acetyllysine; alternate. Lysine 102 participates in a covalent cross-link: Glycyl lysine isopeptide (Lys-Gly) (interchain with G-Cter in SUMO2); alternate. Residue threonine 106 is modified to Phosphothreonine.

Belongs to the pro/parathymosin family. Interacts with NUPR1; regulates apoptotic process. Post-translationally, covalently linked to a small RNA of about 20 nucleotides.

Its subcellular location is the nucleus. Its function is as follows. Prothymosin alpha may mediate immune function by conferring resistance to certain opportunistic infections. This Bos taurus (Bovine) protein is Prothymosin alpha (PTMA).